The sequence spans 295 residues: MEVRRRPPNPAVHVASLTYQVKVPGSSPSNILEEIVWYKEREVNAWREQLPLQQLQNQVRGLTQTPRDFLAALRQAPTRPAVIAEVKKASPSKGVLREDFDPVAIAQAYAANGAACISVLTDEKFFQGGFENLQRVRAAVDVPLLCKDFVIYPYQIYKARLLGADAVLLIAAILSDADLRYFLKIAHSLGLNALVEVHSLPELERVLALDDLRLVGINNRNLKTFVTDLAVTEHLAAQCRDRDLLLVSESGLFTGADLDRVTQAGAQAVLIGESLVKQPDPGLALQQLVGDRPSA.

The protein belongs to the TrpC family.

The enzyme catalyses 1-(2-carboxyphenylamino)-1-deoxy-D-ribulose 5-phosphate + H(+) = (1S,2R)-1-C-(indol-3-yl)glycerol 3-phosphate + CO2 + H2O. It functions in the pathway amino-acid biosynthesis; L-tryptophan biosynthesis; L-tryptophan from chorismate: step 4/5. This is Indole-3-glycerol phosphate synthase from Synechococcus sp. (strain ATCC 27144 / PCC 6301 / SAUG 1402/1) (Anacystis nidulans).